Reading from the N-terminus, the 696-residue chain is DNA topoisomerase 6 subunit B (696 aa).

The interval Met1–Lys36 is disordered. The segment covering Ala20 to Lys36 has biased composition (low complexity). Residues Asn88, Asp187, Thr208 to Lys209, Gly217 to Lys224, and Lys543 each bind ATP.

The protein belongs to the TOP6B family. As to quaternary structure, homodimer. Heterotetramer of two TOP6A and two TOP6B subunits. Interacts with SPO11-4.

It is found in the nucleus. The catalysed reaction is ATP-dependent breakage, passage and rejoining of double-stranded DNA.. Functionally, component of the DNA topoisomerase VI involved in chromatin organization and progression of endoreduplication cycles. Relaxes both positive and negative superturns and exhibits a strong decatenase activity. The B subunit binds ATP. The chain is DNA topoisomerase 6 subunit B (TOP6B) from Oryza sativa subsp. japonica (Rice).